The chain runs to 86 residues: Serine protease inhibitor Kazal-type 4 (86 aa).

The first 26 residues, 1-26, serve as a signal peptide directing secretion; sequence MAVRLWVVALALAALFIVDREVPVSA. The Kazal-like domain maps to 31-86; sequence FSRMPICEHMTESPDCSRIYDPVCGTDGVTYESECKLCLARIENKQDIQIVKDGEC. Disulfide bonds link C37–C68, C46–C65, and C54–C86.

As to expression, synthesized in duodenal goblet cells and in monocytes in bone marrow and blood.

It localises to the secreted. In terms of biological role, inhibits the glucose-induced insulin secretion from perfused pancreas; also plays a role in the immune system. Does not inhibit trypsin. The polypeptide is Serine protease inhibitor Kazal-type 4 (SPINK4) (Sus scrofa (Pig)).